We begin with the raw amino-acid sequence, 1165 residues long: Peroxisomal ATPase PEX6 (1165 aa).

It belongs to the AAA ATPase family. In terms of assembly, interacts with PEX1; forming the PEX1-PEX6 AAA ATPase complex, which is composed of a heterohexamer formed by a trimer of PEX1-PEX6 dimers.

The protein resides in the membrane. The catalysed reaction is ATP + H2O = ADP + phosphate + H(+). Component of the PEX1-PEX6 AAA ATPase complex involved in peroxisome biosynthesis. The complex acts as a protein dislocase complex that mediates the ATP-dependent extraction of the PEX5 receptor from peroxisomal membranes, an essential step for PEX5 recycling. Specifically recognizes PEX5 monoubiquitinated at 'Cys-6', and pulls it out of the peroxisome lumen through the PEX2-PEX10-PEX12 retrotranslocation channel. Extraction by the PEX1-PEX6 AAA ATPase complex is accompanied by unfolding of the TPR repeats and release of bound cargo from PEX5. In Komagataella pastoris (Yeast), this protein is Peroxisomal ATPase PEX6.